Here is a 364-residue protein sequence, read N- to C-terminus: Spermidine/putrescine import ATP-binding protein PotA (364 aa).

The 231-residue stretch at Ile-6–Ile-236 folds into the ABC transporter domain. Gly-38–Thr-45 contributes to the ATP binding site.

This sequence belongs to the ABC transporter superfamily. Spermidine/putrescine importer (TC 3.A.1.11.1) family. As to quaternary structure, the complex is composed of two ATP-binding proteins (PotA), two transmembrane proteins (PotB and PotC) and a solute-binding protein (PotD).

It localises to the cell inner membrane. The catalysed reaction is ATP + H2O + polyamine-[polyamine-binding protein]Side 1 = ADP + phosphate + polyamineSide 2 + [polyamine-binding protein]Side 1.. In terms of biological role, part of the ABC transporter complex PotABCD involved in spermidine/putrescine import. Responsible for energy coupling to the transport system. In Legionella pneumophila subsp. pneumophila (strain Philadelphia 1 / ATCC 33152 / DSM 7513), this protein is Spermidine/putrescine import ATP-binding protein PotA.